Here is a 157-residue protein sequence, read N- to C-terminus: MNGGGKNVLNKNSVGSVSEVGPDSTQEETPRDVRLLHLLLASQSIHQYEDQVPLQLMDFAHRYTQGVLKDALVYNDYAGSGNSAGSGLGVEDIRLAIAARTQYQFKPTAPKELMLQLAAERNKKALPQVMGTWGVRLPPEKYCLTAKEWDLEDPKSM.

A disordered region spans residues 1–29; sequence MNGGGKNVLNKNSVGSVSEVGPDSTQEET. The Histone-fold domain maps to 30-97; the sequence is PRDVRLLHLL…LGVEDIRLAI (68 aa).

The protein belongs to the TAF9 family. In terms of assembly, component of the 1.8 MDa SAGA (Spt-Ada-Gcn5 acetyltransferase) complex, which is composed of 19 subunits TRA1, SPT7, TAF5, NGG1/ADA3, SGF73, SPT20/ADA5, SPT8, TAF12, TAF6, HFI1/ADA1, UBP8, GCN5, ADA2, SPT3, SGF29, TAF10, TAF9, SGF11 and SUS1. The SAGA complex is composed of 4 modules, namely the HAT (histone acetyltransferase) module (GCN5, ADA2, NGG1/ADA3 and SGF29), the DUB (deubiquitinating) module (UBP8, SGF11, SGF73 and SUS1), the core or TAF (TBP-associated factor) module (TAF5, TAF6, TAF9, TAF10 and TAF12), and the Tra1 or SPT (Suppressor of Ty) module (TRA1, HFI1/ADA1, SPT3, SPT7, SPT8 and SPT20/ADA5). The Tra1/SPT module binds activators, the core module recruits TBP (TATA-binding protein), the HAT module contains the histone H3 acetyltransferase GCN5, and the DUB module comprises the histone H2B deubiquitinase UBP8. Also identified in an altered form of SAGA, named SALSA (SAGA altered, Spt8 absent) or SLIK (SAGA-like) complex, which contains a C-terminal truncated form of SPT7 and is missing SPT8. However, it has been shown that the SAGA and SAGA-like SALSA/SLIK transcriptional coactivators are structurally and biochemically equivalent. Component of the 1.2 MDa TFIID complex, which is composed of TATA-binding protein (TBP) and the 14 TBP-associated factors (TAFs). It comprises 1 copy of each TAF1, TAF2, TAF3, TAF7, TAF8, TAF11, TAF13, 2 copies of each TAF4, TAF5, TAF6, TAF9, TAF10, TAF12, and 3 copies of TAF14. In TFIID, TAF9 heterodimerizes with TAF6, forming ultimately an octamer consisting of a TAF6-TAF9 heterotetramer core flanked by TAF4-TAF12 dimers on either side, similar to the histone H2A-H2B-H3-H4 octamer.

The protein resides in the nucleus. Its function is as follows. Functions as a component of both the DNA-binding general transcription initiation factor complex TFIID and the transcription coactivator SAGA complex. Binding of TFIID to a promoter (with or without TATA element) is the initial step in pre-initiation complex (PIC) formation. TFIID plays a key role in the regulation of gene expression by RNA polymerase II through different activities such as transcription activator interaction, core promoter recognition and selectivity, TFIIA and TFIIB interaction, chromatin modification (histone acetylation by TAF1), facilitation of DNA opening and initiation of transcription. SAGA acts as a general cofactor required for essentially all RNA polymerase II transcription. At the promoters, SAGA is required for transcription pre-initiation complex (PIC) recruitment. It influences RNA polymerase II transcriptional activity through different activities such as TBP interaction (via core/TAF module) and promoter selectivity, interaction with transcription activators (via Tra1/SPT module), and chromatin modification through histone acetylation (via HAT module) and deubiquitination (via DUB module). SAGA preferentially acetylates histones H3 (to form H3K9ac, H3K14ac, H3K18ac and H3K23ac) and H2B and deubiquitinates histone H2B. SAGA interacts with DNA via upstream activating sequences (UASs). Also identified in a modified version of SAGA named SALSA or SLIK. The cleavage of SPT7 and the absence of the SPT8 subunit in SLIK neither drive any major conformational differences in its structure compared with SAGA, nor significantly affect HAT, DUB, or DNA-binding activities. The sequence is that of SAGA complex/transcription factor TFIID complex subunit TAF9 (TAF9) from Saccharomyces cerevisiae (strain ATCC 204508 / S288c) (Baker's yeast).